We begin with the raw amino-acid sequence, 296 residues long: tRNA dimethylallyltransferase (296 aa).

Residue 10-17 coordinates ATP; that stretch reads GPTASGKT. Residue 12 to 17 participates in substrate binding; sequence TASGKT. Residues 35 to 38 form an interaction with substrate tRNA region; sequence DSRQ.

This sequence belongs to the IPP transferase family. In terms of assembly, monomer. It depends on Mg(2+) as a cofactor.

It catalyses the reaction adenosine(37) in tRNA + dimethylallyl diphosphate = N(6)-dimethylallyladenosine(37) in tRNA + diphosphate. Functionally, catalyzes the transfer of a dimethylallyl group onto the adenine at position 37 in tRNAs that read codons beginning with uridine, leading to the formation of N6-(dimethylallyl)adenosine (i(6)A). The chain is tRNA dimethylallyltransferase from Synechococcus sp. (strain RCC307).